The chain runs to 678 residues: Protein mono-ADP-ribosyltransferase PARP15 (678 aa).

Positions 1-19 (MAAPGPLPAAALSPGAPTP) are enriched in low complexity. The segment at 1-67 (MAAPGPLPAA…SSRSMSRDNK (67 aa)) is disordered. Residues 49-58 (GARKASRRSS) show a composition bias toward basic residues. Macro domains lie at 78 to 267 (NVVA…TNWS) and 293 to 464 (CFTA…KKRD). Substrate-binding positions include 312–313 (DI), 324–325 (ST), Arg331, Val335, 409–413 (GTGNA), and Gln449. Residues 482-678 (LPEHWTDMNH…YPEYLITFTA (197 aa)) form the PARP catalytic domain.

It belongs to the ARTD/PARP family.

The protein localises to the nucleus. The enzyme catalyses L-aspartyl-[protein] + NAD(+) = 4-O-(ADP-D-ribosyl)-L-aspartyl-[protein] + nicotinamide. It catalyses the reaction L-glutamyl-[protein] + NAD(+) = 5-O-(ADP-D-ribosyl)-L-glutamyl-[protein] + nicotinamide. Mono-ADP-ribosyltransferase that mediates mono-ADP-ribosylation of target proteins. Acts as a negative regulator of transcription. In Homo sapiens (Human), this protein is Protein mono-ADP-ribosyltransferase PARP15.